The sequence spans 20 residues: 23 kDa cell wall protein (20 aa).

It localises to the secreted. The protein localises to the cell wall. In Solanum lycopersicum (Tomato), this protein is 23 kDa cell wall protein.